We begin with the raw amino-acid sequence, 403 residues long: GPI-N-acetylgalactosamine transferase PGAP4 (403 aa).

Over 1-22 (MTTSTSPAAMLLRRLRRLSWGS) the chain is Cytoplasmic. A helical transmembrane segment spans residues 23 to 43 (TAVQLFILTVVTFGLLAPLAC). Topologically, residues 44–264 (HRLLHSYFYL…INPEPMRILE (221 aa)) are lumenal. Valine 109 provides a ligand contact to UDP-N-acetyl-alpha-D-galactosamine. Disulfide bonds link cysteine 132/cysteine 136 and cysteine 144/cysteine 194. The short motif at 211–213 (EDD) is the DXD motif element. Residues 265-285 (WVGVGMLLGPVLTWIYMRFAC) traverse the membrane as a helical segment. Residues 286 to 287 (RP) lie on the Cytoplasmic side of the membrane. A helical transmembrane segment spans residues 288 to 308 (GFSWPVMLFFCLYSMGLVELV). At 309 to 403 (GRHYFLELRR…LRYNFHPSLL (95 aa)) the chain is on the lumenal side. Cysteine 332 and cysteine 333 are joined by a disulfide. Positions 334, 335, and 362 each coordinate UDP-N-acetyl-alpha-D-galactosamine.

The protein belongs to the PGAP4 family. In terms of processing, glycosylated.

The protein localises to the golgi apparatus membrane. Its function is as follows. Golgi-resident glycosylphosphatidylinositol (GPI)-N-acetylgalactosamine transferase that catalyzes the N-acetyl-beta-D-galactosamine transfer from an UDP-N-acetyl-alpha-D-galactosamine to the 4-OH-position of first mannose of the glycosylphosphatidylinositol (GPI) of a GPI-anchored protein (GPI-AP). This modification occurs after the fatty acid remodeling step of the GPI-anchor maturation. This Mus musculus (Mouse) protein is GPI-N-acetylgalactosamine transferase PGAP4.